Here is an 801-residue protein sequence, read N- to C-terminus: Phenylalanine--tRNA ligase beta subunit (801 aa).

One can recognise a tRNA-binding domain in the interval 39-153 (AEGLSKLVVG…EGAIPGDSIF (115 aa)). The 76-residue stretch at 406–481 (TEPVEVSTTL…RIYGYEKLPT (76 aa)) folds into the B5 domain. Residues D459, D465, E468, and E469 each coordinate Mg(2+). Residues 708-801 (TKYPSVSRDI…LVEKVNAEIR (94 aa)) form the FDX-ACB domain.

Belongs to the phenylalanyl-tRNA synthetase beta subunit family. Type 1 subfamily. Tetramer of two alpha and two beta subunits. The cofactor is Mg(2+).

Its subcellular location is the cytoplasm. The enzyme catalyses tRNA(Phe) + L-phenylalanine + ATP = L-phenylalanyl-tRNA(Phe) + AMP + diphosphate + H(+). In Streptococcus agalactiae serotype Ia (strain ATCC 27591 / A909 / CDC SS700), this protein is Phenylalanine--tRNA ligase beta subunit.